The following is a 727-amino-acid chain: MTVSENSVLETEVLVGGSAMPNERPGAMEPQSLSQMPEGFPRRSTVANGVRSKVSRRFFVVGGALALSAFAIYEMGAVFSIGGITPLEYLMLALFAINFCWIALAFCSGIAGFFMLLKKPKPNELEQTELHTRTAILMPTYNESPDRVFSAVSVMAEALSQTGHGHAFDWFILSDTTDPEIALLEEQAFLVLRQETHKHSRVYYRRRRKNVARKAGNVADFCRRWGSRYDHLLVLDADSLMESSTITGLAQRMQADPDAGLIQTIPSLINGTTLMARLQQFAARIYGPVIGTGLGWWVQKEGNFWGHNAIIRTEAFMGAAGLPNLKGKPPFGGHILSHDFVEAALIRRAGWSVVIAYDLPGSYEECPPSIVDLAVRDRRWCQGNLQHSRILPTKGLHWVSRLHLMTGIMAYLSSPFWLLLILTGLMLALQAHFIRPEYFTDQFSLFPTWPIMDSDRALRLFYITMGVLFGPKIFGVLLLLKDGNFARSVGGRIKAILSVIFEVILSALIAPIMMFIHCGAVMSILMGRDSGWSPQRRDDGSMPWLTLIYRHRWHMLAGVMLGYAAILDSLTLLAWMSPALIGLWLAVPISAWTGSIKIGEFFKRIGILATPEERNPAPICIRAQEARAAYQAHIEQPWTLAQVLKDPALMELHLAMVDKQPLRAAGTPIEPVEAIVHVKVHEAQCQQSALALFNRQEMALVLANPLMLRSLQKLPEQFVPEDLVSFC.

The disordered stretch occupies residues serine 18 to arginine 43. 7 consecutive transmembrane segments (helical) span residues phenylalanine 58–valine 78, leucine 94–phenylalanine 114, leucine 278–valine 298, isoleucine 408–alanine 428, leucine 460–leucine 480, isoleucine 496–isoleucine 516, and leucine 572–tryptophan 592.

The protein belongs to the glycosyltransferase 2 family. OpgH subfamily.

It is found in the cell inner membrane. It participates in glycan metabolism; osmoregulated periplasmic glucan (OPG) biosynthesis. Involved in the biosynthesis of osmoregulated periplasmic glucans (OPGs). The protein is Glucans biosynthesis glucosyltransferase H of Shewanella sp. (strain ANA-3).